A 550-amino-acid polypeptide reads, in one-letter code: Dihydroxy-acid dehydratase (550 aa).

A Mg(2+)-binding site is contributed by Asp-78. Cys-119 contributes to the [2Fe-2S] cluster binding site. Positions 120 and 121 each coordinate Mg(2+). Lys-121 carries the post-translational modification N6-carboxylysine. Cys-191 provides a ligand contact to [2Fe-2S] cluster. Residue Glu-440 participates in Mg(2+) binding. Ser-466 serves as the catalytic Proton acceptor.

Belongs to the IlvD/Edd family. In terms of assembly, homodimer. [2Fe-2S] cluster is required as a cofactor. Mg(2+) serves as cofactor.

The catalysed reaction is (2R)-2,3-dihydroxy-3-methylbutanoate = 3-methyl-2-oxobutanoate + H2O. It carries out the reaction (2R,3R)-2,3-dihydroxy-3-methylpentanoate = (S)-3-methyl-2-oxopentanoate + H2O. It functions in the pathway amino-acid biosynthesis; L-isoleucine biosynthesis; L-isoleucine from 2-oxobutanoate: step 3/4. Its pathway is amino-acid biosynthesis; L-valine biosynthesis; L-valine from pyruvate: step 3/4. Its function is as follows. Functions in the biosynthesis of branched-chain amino acids. Catalyzes the dehydration of (2R,3R)-2,3-dihydroxy-3-methylpentanoate (2,3-dihydroxy-3-methylvalerate) into 2-oxo-3-methylpentanoate (2-oxo-3-methylvalerate) and of (2R)-2,3-dihydroxy-3-methylbutanoate (2,3-dihydroxyisovalerate) into 2-oxo-3-methylbutanoate (2-oxoisovalerate), the penultimate precursor to L-isoleucine and L-valine, respectively. The protein is Dihydroxy-acid dehydratase of Methanococcus vannielii (strain ATCC 35089 / DSM 1224 / JCM 13029 / OCM 148 / SB).